A 488-amino-acid polypeptide reads, in one-letter code: F-box protein At3g60790 (488 aa).

The tract at residues 1 to 21 is disordered; it reads MTTQSSSSSSSLPSSLSSTPP. The F-box domain maps to 49–95; the sequence is VDRISMLPDEMLQKILSTLSTKDAVITSTLSKRWVDQWKRIPHLCVD.

In Arabidopsis thaliana (Mouse-ear cress), this protein is F-box protein At3g60790.